The sequence spans 854 residues: Nucleolar MIF4G domain-containing protein 1 homolog (854 aa).

4 disordered regions span residues 1 to 38, 55 to 105, 120 to 161, and 217 to 306; these read MAKIKKKEAKAKPLTRKEQRKQKSEFKKQNKRLYFAGK, QSQL…DAEV, PLGK…KQRI, and RKWE…RDAE. Positions 15-28 are enriched in basic and acidic residues; sequence TRKEQRKQKSEFKK. Over residues 60–71 the composition is skewed to basic residues; it reads KNKKKKRSKKPK. Over residues 88–105 the composition is skewed to acidic residues; that stretch reads IDSDDDESIDSDFSDAEV. 2 stretches are compositionally biased toward basic and acidic residues: residues 135–156 and 217–238; these read RQDEEAVRRKELRQQKELESKS and RKWEEKQERKKKLKEQQEKEEA. Residues 242–289 show a composition bias toward acidic residues; sequence SDEEEDKEDRDEPMDNFSEDDSGSEGEDDDEDLTGEEEQSEEDSEQEE. Basic and acidic residues predominate over residues 290-306; the sequence is NAPKIKEDIYGRKRDAE. Positions 352–553 constitute an MIF4G domain; that stretch reads LKQCKGLLNR…DILNAVKNNN (202 aa). One can recognise an MI domain in the interval 650–764; that stretch reads AERRNIFCII…QLSVLKVVDF (115 aa).

It belongs to the CWC22 family.

It localises to the nucleus. It is found in the nucleolus. This chain is Nucleolar MIF4G domain-containing protein 1 homolog, found in Drosophila melanogaster (Fruit fly).